The sequence spans 28 residues: Ranatuerin-2BYb (28 aa).

Cysteine 23 and cysteine 28 are oxidised to a cystine.

As to expression, expressed by the skin glands.

The protein resides in the secreted. Functionally, antibacterial activity against Gram-negative bacterium E.coli. Very weak hemolysis activity. The chain is Ranatuerin-2BYb from Rana boylii (Foothill yellow-legged frog).